The following is a 380-amino-acid chain: Cytochrome b (380 aa).

The next 4 membrane-spanning stretches (helical) occupy residues 34–54 (FGSL…LLAA), 78–99 (WLIR…YLHI), 114–134 (WNTG…GYVL), and 179–199 (FFTL…IHLT). Residues histidine 84 and histidine 98 each contribute to the heme b site. 2 residues coordinate heme b: histidine 183 and histidine 197. Residue histidine 202 coordinates a ubiquinone. The next 4 helical transmembrane spans lie at 227 to 247 (TKDI…ALFS), 289 to 309 (LGGV…PLLH), 321 to 341 (LSQL…WIGS), and 348 to 368 (FIII…ILFP).

This sequence belongs to the cytochrome b family. As to quaternary structure, the cytochrome bc1 complex contains 11 subunits: 3 respiratory subunits (MT-CYB, CYC1 and UQCRFS1), 2 core proteins (UQCRC1 and UQCRC2) and 6 low-molecular weight proteins (UQCRH/QCR6, UQCRB/QCR7, UQCRQ/QCR8, UQCR10/QCR9, UQCR11/QCR10 and a cleavage product of UQCRFS1). This cytochrome bc1 complex then forms a dimer. The cofactor is heme b.

Its subcellular location is the mitochondrion inner membrane. In terms of biological role, component of the ubiquinol-cytochrome c reductase complex (complex III or cytochrome b-c1 complex) that is part of the mitochondrial respiratory chain. The b-c1 complex mediates electron transfer from ubiquinol to cytochrome c. Contributes to the generation of a proton gradient across the mitochondrial membrane that is then used for ATP synthesis. The polypeptide is Cytochrome b (MT-CYB) (Eudyptes chrysocome (Western rockhopper penguin)).